The following is a 185-amino-acid chain: Threonylcarbamoyl-AMP synthase (185 aa).

The 182-residue stretch at 4–185 (SFRVQQAARE…LATGEVVRPG (182 aa)) folds into the YrdC-like domain.

It belongs to the SUA5 family. TsaC subfamily.

It is found in the cytoplasm. It catalyses the reaction L-threonine + hydrogencarbonate + ATP = L-threonylcarbamoyladenylate + diphosphate + H2O. Required for the formation of a threonylcarbamoyl group on adenosine at position 37 (t(6)A37) in tRNAs that read codons beginning with adenine. Catalyzes the conversion of L-threonine, HCO(3)(-)/CO(2) and ATP to give threonylcarbamoyl-AMP (TC-AMP) as the acyladenylate intermediate, with the release of diphosphate. In Pseudomonas putida (strain ATCC 700007 / DSM 6899 / JCM 31910 / BCRC 17059 / LMG 24140 / F1), this protein is Threonylcarbamoyl-AMP synthase.